The sequence spans 191 residues: NF-kappa-B inhibitor-interacting Ras-like protein 2 (191 aa).

The interval 1-191 is small GTPase-like; sequence MGKSCKVVVC…KNKGSGSLDG (191 aa). 11 to 18 contacts GTP; the sequence is GQASVGKT. The short motif at 35–43 is the Effector region element; the sequence is MIETQEDIY. GTP contacts are provided by residues 61–65 and 120–123; these read DTRGL and NKCD. The disordered stretch occupies residues 169–191; that stretch reads TQPQSKSAFPLSRKNKGSGSLDG.

Belongs to the small GTPase superfamily. Ras family. KappaB-Ras subfamily. As to quaternary structure, interacts with both NF-kappa-B inhibitor alpha (NFKBIA) and beta (NFKBIB) in vitro. However, it probably only interacts with NFKBIB in vivo. Interacts with GFOD1.

Its subcellular location is the cytoplasm. Atypical Ras-like protein that acts as a potent regulator of NF-kappa-B activity by preventing the degradation of NF-kappa-B inhibitor beta (NFKBIB) by most signals, explaining why NFKBIB is more resistant to degradation. May act by blocking phosphorylation of NFKBIB and nuclear localization of p65/RELA NF-kappa-B subunit. It is unclear whether it acts as a GTPase. Both GTP- and GDP-bound forms block phosphorylation of NFKBIB. In Mus musculus (Mouse), this protein is NF-kappa-B inhibitor-interacting Ras-like protein 2 (Nkiras2).